The chain runs to 175 residues: Large ribosomal subunit protein uL10 (175 aa).

Belongs to the universal ribosomal protein uL10 family. Part of the ribosomal stalk of the 50S ribosomal subunit. The N-terminus interacts with L11 and the large rRNA to form the base of the stalk. The C-terminus forms an elongated spine to which L12 dimers bind in a sequential fashion forming a multimeric L10(L12)X complex.

In terms of biological role, forms part of the ribosomal stalk, playing a central role in the interaction of the ribosome with GTP-bound translation factors. The polypeptide is Large ribosomal subunit protein uL10 (Methylobacterium sp. (strain 4-46)).